The sequence spans 191 residues: GDP-mannose pyrophosphatase (191 aa).

GDP-alpha-D-mannose is bound by residues Y17, K38–E40, R67, and A85–L87. One can recognise a Nudix hydrolase domain in the interval D43–L180. Positions 85, 100, and 104 each coordinate Mg(2+). The short motif at G86–G106 is the Nudix box element. Residues E104, E127, D150–E151, and K176 contribute to the GDP-alpha-D-mannose site. Position 151 (E151) interacts with Mg(2+).

It belongs to the Nudix hydrolase family. NudK subfamily. In terms of assembly, homodimer. Mg(2+) is required as a cofactor.

The catalysed reaction is GDP-alpha-D-mannose + H2O = alpha-D-mannose 1-phosphate + GMP + 2 H(+). Functionally, nucleoside diphosphate sugar hydrolase that hydrolyzes GDP-mannose as its preferred substrate, yielding GMP and mannose-1-phosphate. The protein is GDP-mannose pyrophosphatase (nudK) of Salmonella typhi.